The sequence spans 213 residues: Thiamine-phosphate synthase (213 aa).

4-amino-2-methyl-5-(diphosphooxymethyl)pyrimidine-binding positions include 40 to 44 (QFREK) and Asn-75. Mg(2+) is bound by residues Asp-76 and Asp-95. Residue Ser-113 coordinates 4-amino-2-methyl-5-(diphosphooxymethyl)pyrimidine. 139–141 (TPS) is a binding site for 2-[(2R,5Z)-2-carboxy-4-methylthiazol-5(2H)-ylidene]ethyl phosphate. Lys-142 serves as a coordination point for 4-amino-2-methyl-5-(diphosphooxymethyl)pyrimidine. Residues Gly-171 and 191–192 (IS) each bind 2-[(2R,5Z)-2-carboxy-4-methylthiazol-5(2H)-ylidene]ethyl phosphate.

This sequence belongs to the thiamine-phosphate synthase family. The cofactor is Mg(2+).

The catalysed reaction is 2-[(2R,5Z)-2-carboxy-4-methylthiazol-5(2H)-ylidene]ethyl phosphate + 4-amino-2-methyl-5-(diphosphooxymethyl)pyrimidine + 2 H(+) = thiamine phosphate + CO2 + diphosphate. It catalyses the reaction 2-(2-carboxy-4-methylthiazol-5-yl)ethyl phosphate + 4-amino-2-methyl-5-(diphosphooxymethyl)pyrimidine + 2 H(+) = thiamine phosphate + CO2 + diphosphate. The enzyme catalyses 4-methyl-5-(2-phosphooxyethyl)-thiazole + 4-amino-2-methyl-5-(diphosphooxymethyl)pyrimidine + H(+) = thiamine phosphate + diphosphate. Its pathway is cofactor biosynthesis; thiamine diphosphate biosynthesis; thiamine phosphate from 4-amino-2-methyl-5-diphosphomethylpyrimidine and 4-methyl-5-(2-phosphoethyl)-thiazole: step 1/1. Its function is as follows. Condenses 4-methyl-5-(beta-hydroxyethyl)thiazole monophosphate (THZ-P) and 2-methyl-4-amino-5-hydroxymethyl pyrimidine pyrophosphate (HMP-PP) to form thiamine monophosphate (TMP). The polypeptide is Thiamine-phosphate synthase (Staphylococcus aureus (strain MSSA476)).